The primary structure comprises 422 residues: Aminopentol aminotransferase (422 aa).

The residue at position 258 (K258) is an N6-(pyridoxal phosphate)lysine.

The protein belongs to the class-III pyridoxal-phosphate-dependent aminotransferase family. Pyridoxal 5'-phosphate serves as cofactor.

It localises to the cytoplasm. The catalysed reaction is (2S,3S,5R,10R,12S,14S,15R,16R)-2-amino-12,16-dimethylicosane-3,5,10,14,15-pentol + pyruvate = (3S,5R,10R,12S,14S,15R,16R)-3,5,10,14,15-pentahydroxy-12,16-dimethylicosan-2-one + L-alanine. Functionally, involved in degradation of fumonisin B1. Catalyzes the deamination of aminopentol (HFB1) to 2-keto-HFB1. Pyruvate is the preferred cosubstrate, but it can also use several other alpha-keto acids as amino group acceptors. The protein is Aminopentol aminotransferase (fumI) of Sphingopyxis macrogoltabida (Sphingomonas macrogoltabidus).